The following is a 158-amino-acid chain: Transcription elongation factor GreA (158 aa).

This sequence belongs to the GreA/GreB family.

Its function is as follows. Necessary for efficient RNA polymerase transcription elongation past template-encoded arresting sites. The arresting sites in DNA have the property of trapping a certain fraction of elongating RNA polymerases that pass through, resulting in locked ternary complexes. Cleavage of the nascent transcript by cleavage factors such as GreA or GreB allows the resumption of elongation from the new 3'terminus. GreA releases sequences of 2 to 3 nucleotides. This Rhizobium etli (strain CIAT 652) protein is Transcription elongation factor GreA.